The following is a 238-amino-acid chain: Ubiquinone biosynthesis O-methyltransferase (238 aa).

Arg36, Gly56, Asp77, and Met125 together coordinate S-adenosyl-L-methionine.

The protein belongs to the methyltransferase superfamily. UbiG/COQ3 family.

It catalyses the reaction a 3-demethylubiquinol + S-adenosyl-L-methionine = a ubiquinol + S-adenosyl-L-homocysteine + H(+). It carries out the reaction a 3-(all-trans-polyprenyl)benzene-1,2-diol + S-adenosyl-L-methionine = a 2-methoxy-6-(all-trans-polyprenyl)phenol + S-adenosyl-L-homocysteine + H(+). The protein operates within cofactor biosynthesis; ubiquinone biosynthesis. Its function is as follows. O-methyltransferase that catalyzes the 2 O-methylation steps in the ubiquinone biosynthetic pathway. This Histophilus somni (strain 2336) (Haemophilus somnus) protein is Ubiquinone biosynthesis O-methyltransferase.